Here is a 960-residue protein sequence, read N- to C-terminus: Gamma-aminobutyric acid type B receptor subunit 1 (960 aa).

The first 19 residues, 1-19 (MLLLLLVPLFLRPLGAGGA), serve as a signal peptide directing secretion. The Extracellular portion of the chain corresponds to 20–590 (QTPNATSEGC…KTFRFLSQKL (571 aa)). Residues Asn-23 and Asn-83 are each glycosylated (N-linked (GlcNAc...) asparagine). Sushi domains are found at residues 29 to 95 (CQII…PSRC) and 97 to 158 (RICS…HCQV). Cystine bridges form between Cys-99–Cys-144, Cys-130–Cys-156, and Cys-219–Cys-245. 4 residues coordinate 4-aminobutanoate: Ser-246, Ser-269, His-286, and Tyr-366. A disulfide bridge links Cys-375 with Cys-409. N-linked (GlcNAc...) asparagine glycans are attached at residues Asn-408 and Asn-439. Glu-465 is a 4-aminobutanoate binding site. N-linked (GlcNAc...) asparagine glycans are attached at residues Asn-481, Asn-501, and Asn-513. A helical membrane pass occupies residues 591–611 (FISVSVLSSLGIVLAVVCLSF). Residues 612–630 (NIYNSHVRYIQNSQPNLNN) lie on the Cytoplasmic side of the membrane. The helical transmembrane segment at 631-651 (LTAVGCSLALAAVFPLGLDGY) threads the bilayer. At 652 to 666 (HIGRSQFPFVCQARL) the chain is on the extracellular side. Residues 667–687 (WLLGLGFSLGYGSMFTKIWWV) traverse the membrane as a helical segment. Over 688 to 709 (HTVFTKKEEKKEWRKTLEPWKL) the chain is Cytoplasmic. The helical transmembrane segment at 710-730 (YATVGLLVGMDVLTLAIWQIV) threads the bilayer. Over 731 to 767 (DPLHRTIETFAKEEPKEDIDVSILPQLEHCSSKKMNT) the chain is Extracellular. The helical transmembrane segment at 768-788 (WLGIFYGYKGLLLLLGIFLAY) threads the bilayer. Topologically, residues 789–803 (ETKSVSTEKINDHRA) are cytoplasmic. The helical transmembrane segment at 804–824 (VGMAIYNVAVLCLITAPVTMI) threads the bilayer. At 825–832 (LSSQQDAA) the chain is on the extracellular side. Residues 833 to 853 (FAFASLAIVFSSYITLVVLFV) form a helical membrane-spanning segment. The Cytoplasmic portion of the chain corresponds to 854–960 (PKMRRLITRG…DGSRVHLLYK (107 aa)). Positions 866 to 879 (QSETQDTMKTGSST) are enriched in polar residues. Disordered regions lie at residues 866–891 (QSETQDTMKTGSSTNNNEEEKSRLLE) and 908–960 (VSEL…LLYK). Residues 870–924 (QDTMKTGSSTNNNEEEKSRLLEKENRELEKIIAEKEERVSELRHQLQSRQQLRSR) are a coiled coil. Phosphothreonine is present on Thr-872. The interaction with ATF4 stretch occupies residues 887–915 (SRLLEKENRELEKIIAEKEERVSELRHQL). Thr-929 bears the Phosphothreonine mark.

Belongs to the G-protein coupled receptor 3 family. GABA-B receptor subfamily. As to quaternary structure, heterodimer of GABBR1 and GABBR2. Homodimers may form, but are inactive. Interacts (via C-terminus) with ATF4 (via leucine zipper domain). Interacts with JAKMIP1. As to expression, ubiquitously expressed in tissues including the forebrain, cerebellum, eye, atrium, ventricle, lung, stomach, small intestine, colon, liver, spleen, kidney, urinary bladder and skeletal muscle. Expressed at low levels in testis, and more highly in brain regions. Expression is high the brain regions including cerebral cortical layers, with higher expression in VIb than in the II-V layers, pyramidal CA1-CA3 cell layers and granular cell layers of the hippocampus, granular cell layers of the dentate gyrus, including the caudate, putamen, nucleus accumbens and olfactory tubercle, the granular layer cell layers of the medial habenula, in the cerebellum, predominantly in Purkinje cells, and in the granule cell layer. Also expressed in areas of the brain including the medial geniculate nucleus, substantia nigra, pars compacta, the ventral tegmental area, and in several thalamic, amygdaloid and hypothalamic nuclei, such as the arcuate nucleus of the hypothalamus and mammilary bodies of the hypothalamus. Expressed in the amacrine cell of the retina. In terms of tissue distribution, expressed in the brain, spinal cord, stomach, testis, adrenal gland, pituitary, spleen and prostate. Expressed in the brain, spinal cord, stomach, testis, kidney and liver. As to expression, ubiquitously expressed. In terms of tissue distribution, expressed in the forebrain, cerebellum, eye, kidney and urinary bladder. Ubiquitously expressed with high expression in the pyramidal CA1-CA3 cell layers of the hippocampus, the granule cell layers of the dentate gyrus and olfactory tubercle, the whole cortex, and Purkinje cells of the cerebellum. Moderate expression in the granule cell layer of the cerebellum.

The protein localises to the cell membrane. The protein resides in the postsynaptic cell membrane. It is found in the cell projection. Its subcellular location is the dendrite. It localises to the perikaryon. In terms of biological role, component of a heterodimeric G-protein coupled receptor for GABA, formed by GABBR1 and GABBR2. Within the heterodimeric GABA receptor, only GABBR1 seems to bind agonists, while GABBR2 mediates coupling to G proteins. Ligand binding causes a conformation change that triggers signaling via guanine nucleotide-binding proteins (G proteins) and modulates the activity of down-stream effectors, such as adenylate cyclase. Signaling inhibits adenylate cyclase, stimulates phospholipase A2, activates potassium channels, inactivates voltage-dependent calcium-channels and modulates inositol phospholipid hydrolysis. Calcium is required for high affinity binding to GABA. Plays a critical role in the fine-tuning of inhibitory synaptic transmission. Pre-synaptic GABA receptor inhibits neurotransmitter release by down-regulating high-voltage activated calcium channels, whereas postsynaptic GABA receptor decreases neuronal excitability by activating a prominent inwardly rectifying potassium (Kir) conductance that underlies the late inhibitory postsynaptic potentials. Not only implicated in synaptic inhibition but also in hippocampal long-term potentiation, slow wave sleep, muscle relaxation and antinociception. The polypeptide is Gamma-aminobutyric acid type B receptor subunit 1 (Gabbr1) (Rattus norvegicus (Rat)).